The sequence spans 622 residues: Deoxynucleoside triphosphate triphosphohydrolase SAMHD1 (622 aa).

The SAM domain occupies 26–89 (WDVEDTVAYL…LHCLQKLSQI (64 aa)). The GTP site is built by K95 and V96. N98 contacts dGTP. Residues D116, Q121, and R124 each contribute to the GTP site. DGTP is bound by residues Q128, L129, V135, and R143. Q128 is a dATP binding site. Q128 provides a ligand contact to dCTP. Residue Q128 participates in dTTP binding. Residue R143 coordinates dATP. R143 contacts dCTP. R143 contacts dTTP. The 154-residue stretch at 143–296 (RFEHSIGVGY…GIDVDKWDYF (154 aa)) folds into the HD domain. The Mn(2+) site is built by H146, H185, and D186. DATP contacts are provided by H189 and H194. Residues H189 and H194 each coordinate dCTP. DTTP is bound by residues H189 and H194. Residue H212 is part of the active site. D291 contributes to the Mn(2+) binding site. The dGTP site is built by K292, Y295, D299, R313, R332, K334, N338, R346, Y354, Q355, H356, and K357. 3 residues coordinate dATP: K292, Y295, and D299. Residues K292, Y295, and D299 each contribute to the dCTP site. Residues K292, Y295, and D299 each contribute to the dTTP site. R346 contacts dATP. DCTP is bound at residue R346. Position 355 (Q355) interacts with dATP. Q355 contributes to the dCTP binding site. A dTTP-binding site is contributed by Q355. GTP contacts are provided by R431, K435, and K502. Residue K502 participates in dGTP binding. The interval 571-622 (TPLKQDWHAREDEDEEEEEKHRQNQTLPHHTPQRTGRNVKVDLFQARGETKL) is disordered. The segment covering 594–606 (NQTLPHHTPQRTG) has biased composition (polar residues).

The protein belongs to the SAMHD1 family. In terms of assembly, homodimer; in absence of GTP and dNTP. Homotetramer; in GTP- and dNTP-bound form. Interacts with rbbp8/CtIP. Zn(2+) is required as a cofactor.

The protein localises to the nucleus. The protein resides in the chromosome. The enzyme catalyses a 2'-deoxyribonucleoside 5'-triphosphate + H2O = a 2'-deoxyribonucleoside + triphosphate + H(+). The catalysed reaction is dATP + H2O = 2'-deoxyadenosine + triphosphate + H(+). It catalyses the reaction dCTP + H2O = 2'-deoxycytidine + triphosphate + H(+). It carries out the reaction dGTP + H2O = 2'-deoxyguanosine + triphosphate + H(+). The enzyme catalyses dTTP + H2O = thymidine + triphosphate + H(+). Allosterically activated and regulated via the combined actions of GTP and dNTPs (dATP, dGTP, dTTP and dCTP): Allosteric site 1 binds GTP, while allosteric site 2 binds dNTP. Allosteric activation promotes the formation of highly active homotetramers. Functionally, protein that acts both as a host restriction factor involved in defense response to virus and as a regulator of DNA end resection at stalled replication forks. Has deoxynucleoside triphosphate (dNTPase) activity, which is required to restrict infection by viruses: dNTPase activity reduces cellular dNTP levels to levels too low for retroviral reverse transcription to occur, blocking early-stage virus replication in dendritic and other myeloid cells. Functions during S phase at stalled DNA replication forks to promote the resection of gapped or reversed forks: acts by stimulating the exonuclease activity of MRE11, activating the ATR-CHK1 pathway and allowing the forks to restart replication. Its ability to promote degradation of nascent DNA at stalled replication forks is required to prevent induction of type I interferons, thereby preventing chronic inflammation. Ability to promote DNA end resection at stalled replication forks is independent of dNTPase activity. The chain is Deoxynucleoside triphosphate triphosphohydrolase SAMHD1 from Danio rerio (Zebrafish).